Reading from the N-terminus, the 355-residue chain is Protein RecA (355 aa).

65–72 (GPESSGKT) is an ATP binding site.

It belongs to the RecA family.

Its subcellular location is the cytoplasm. Functionally, can catalyze the hydrolysis of ATP in the presence of single-stranded DNA, the ATP-dependent uptake of single-stranded DNA by duplex DNA, and the ATP-dependent hybridization of homologous single-stranded DNAs. It interacts with LexA causing its activation and leading to its autocatalytic cleavage. This is Protein RecA from Pseudomonas putida (strain ATCC 47054 / DSM 6125 / CFBP 8728 / NCIMB 11950 / KT2440).